Consider the following 324-residue polypeptide: Calmodulin-like protein 12 (324 aa).

EF-hand domains follow at residues 8–43, 44–79, 97–132, 133–168, 187–222, and 223–258; these read DQIT…IGEK, PTKA…NQGH, DQIT…LGKN, RTKA…NQGH, DQIL…LGET, and QTKA…KMID. Ca(2+) is bound by residues Asp21, Asn23, Asp25, Ser27, Glu32, Asp57, Asp59, Asp61, Thr63, Glu68, Asp110, Asn112, Asp114, Ser116, Glu121, Asp146, Asp148, Asp150, Thr152, Glu157, Asp200, Asn202, Asp204, Tyr206, Glu211, Asp236, Asp238, Asp240, Thr242, and Glu247.

This sequence belongs to the calmodulin family. Interacts with PID. Binds to ABCG36.

Its function is as follows. Potential calcium sensor that binds calcium in vitro. The sequence is that of Calmodulin-like protein 12 from Arabidopsis thaliana (Mouse-ear cress).